The primary structure comprises 763 residues: Phosphoglycerol transferase I (763 aa).

A run of 4 helical transmembrane segments spans residues 1–21, 24–44, 77–97, and 108–128; these read MSEL…AWKA, NTWW…LNIT, ILPG…LGWI, and VGYS…SPAF.

It belongs to the OpgB family.

It is found in the cell inner membrane. The enzyme catalyses a phosphatidylglycerol + a membrane-derived-oligosaccharide D-glucose = a 1,2-diacyl-sn-glycerol + a membrane-derived-oligosaccharide 6-(glycerophospho)-D-glucose.. The protein operates within glycan metabolism; osmoregulated periplasmic glucan (OPG) biosynthesis. In terms of biological role, transfers a phosphoglycerol residue from phosphatidylglycerol to the membrane-bound nascent glucan backbones. The polypeptide is Phosphoglycerol transferase I (Salmonella arizonae (strain ATCC BAA-731 / CDC346-86 / RSK2980)).